The chain runs to 230 residues: Ribulose-phosphate 3-epimerase (230 aa).

Residue S10 participates in substrate binding. A divalent metal cation contacts are provided by H35, D37, and H68. D37 serves as the catalytic Proton acceptor. Substrate-binding positions include H68, 146-149 (GFGG), 179-181 (DGG), and 201-202 (GS). D179 serves as a coordination point for a divalent metal cation. D179 (proton donor) is an active-site residue.

Belongs to the ribulose-phosphate 3-epimerase family. As to quaternary structure, homohexamer. A divalent metal cation serves as cofactor.

The enzyme catalyses D-ribulose 5-phosphate = D-xylulose 5-phosphate. Its pathway is carbohydrate degradation. Functionally, catalyzes the reversible epimerization of D-ribulose 5-phosphate to D-xylulose 5-phosphate. This Synechocystis sp. (strain ATCC 27184 / PCC 6803 / Kazusa) protein is Ribulose-phosphate 3-epimerase.